The primary structure comprises 109 residues: Juvenile hormone esterase, isoform A (109 aa).

The protein belongs to the type-B carboxylesterase/lipase family. Fat body, the site of their biosynthesis, and the hemolymph where it is secreted.

It catalyses the reaction juvenile hormone I + H2O = juvenile hormone I carboxylate + methanol + H(+). The enzyme catalyses juvenile hormone III + H2O = juvenile hormone III carboxylate + methanol + H(+). Its function is as follows. JH esterase plays a crucial role in the decrease of JH activity in lepidopteran insects, by hydrolyzing the methyl ester of JH. It is also involved in the transport of JH. This chain is Juvenile hormone esterase, isoform A, found in Trichoplusia ni (Cabbage looper).